We begin with the raw amino-acid sequence, 493 residues long: MHWADVIAADLLKRSNSHRIATGISPSGHIHLGNLREMVTADAIRRALLDAGGEAKIVYIADDFDPLRRRYPFLPEEYENYVGMPLCKIPDPEGCHDSYSEHFLQPFLESLEILGIPVEVRRAYQMYSEGLYENNTRIALKRRDEIARIIAEVTGRELEERWYPFMPLCENCGRINSTRVTSFDENWIYYECDCGHSGRVGYVGGGKLTWRVDWAARWQILSITCEPFGKDHAAAGGSYDTGVRIAREIFDYEPPYPVPYEWIHLKGKGAMKSSKGIVLPVREMVEVIPPEIVRYITIRVKPERHIEFDPGLGLLDLVEEFEEKFKEKDRSVELSLVGEVVYSDVPFRHLIVVGQIANWDLEKALEIIERTGYTVDDVTRRDVERRLKYARKWLEKYAPDNIKFEIPEKVTAEFSEEEKKFLRAYAERLRSDMKPEEIHTLVYDVSKEVGIKSSKAFQAIYKAILGKTYGPRVGYFIKSLGVEWVRERIKAAL.

The 'HIGH' region motif lies at 26-34; sequence PSGHIHLGN. The 'KMSKS' region signature appears at 270 to 274; it reads AMKSS.

The protein belongs to the class-I aminoacyl-tRNA synthetase family.

The protein localises to the cytoplasm. The catalysed reaction is tRNA(Lys) + L-lysine + ATP = L-lysyl-tRNA(Lys) + AMP + diphosphate. This is Lysine--tRNA ligase (lysS) from Archaeoglobus fulgidus (strain ATCC 49558 / DSM 4304 / JCM 9628 / NBRC 100126 / VC-16).